The primary structure comprises 513 residues: Leucine-rich repeat-containing protein 24 (513 aa).

The N-terminal stretch at 1–20 (MALRAPALLPLLLLLLPLRA) is a signal peptide. The LRRNT domain occupies 21–50 (AGCPAACRCYSATVECGALRLRVVPLGIPP). 6 LRR repeats span residues 51–72 (GTQT…ALAP), 75–96 (ALRR…AFRA), 99–120 (RLLE…AFVG), 123–144 (QLRV…TFLH), 147–168 (RLQE…ALAG), and 171–192 (SLAL…ALQP). In terms of domain architecture, LRRCT spans 204 to 259 (NPWRCDCALHWLGAWIKEGGQRLLTSRDRKIMCAEPPRLALQSLLDVSHSSLICIP). An Ig-like C2-type domain is found at 260-361 (PSVHVQPLEL…GAARVPFRLL (102 aa)). Cys-281 and Cys-345 are disulfide-bonded. N-linked (GlcNAc...) asparagine glycans are attached at residues Asn-334 and Asn-363. The segment at 365–391 (SRQQPQQPAQPPPPAARPAGSEPRPEA) is disordered. The chain crosses the membrane as a helical span at residues 406 to 426 (AIAAAIALLALTALLLVAMIC).

The protein localises to the membrane. In Homo sapiens (Human), this protein is Leucine-rich repeat-containing protein 24 (LRRC24).